We begin with the raw amino-acid sequence, 227 residues long: UPF0758 protein PG_0894 (227 aa).

The MPN domain occupies 104-227 (SITDSRMAYR…YFSFADEGLL (124 aa)). Zn(2+) is bound by residues His-175, His-177, and Asp-188. Residues 175–188 (HNHPSGTVRPSEQD) carry the JAMM motif motif.

The protein belongs to the UPF0758 family.

The polypeptide is UPF0758 protein PG_0894 (Porphyromonas gingivalis (strain ATCC BAA-308 / W83)).